Consider the following 538-residue polypeptide: NADH-quinone oxidoreductase subunit N (538 aa).

14 helical membrane passes run 28–48 (LAPVFVLMAGACVAVLVEAFV), 57–77 (QIIVTVATLVVAIASTLTTIA), 94–114 (PTLATWVILLATGLGTVVLFA), 147–167 (HTEVYPLLMFAALGMMCFAAA), 170–190 (LIMMFVALEIFSLPLYLLCGM), 206–226 (FLLGALSSALFLYGIVLLYGC), 249–269 (IVAGMILVAVGLLFKIGAVPF), 288–308 (MAVATKLVALVGLMRVLYVGL), 315–335 (WQIVLAVVAVASMGVGAIVGL), 343–363 (LLAYSAIAHAGFVLVGVVGAW), 380–400 (VLVYMTAYGLASIGFWLLILM), 424–444 (IGVLVVIFVLSFAGIPLTAGF), 458–478 (GYAWLVLIGVLFSLVAAAFYL), and 503–523 (IAGWITLIVCAVFTIVMGVAP).

The protein belongs to the complex I subunit 2 family. In terms of assembly, NDH-1 is composed of 14 different subunits. Subunits NuoA, H, J, K, L, M, N constitute the membrane sector of the complex.

Its subcellular location is the cell membrane. It carries out the reaction a quinone + NADH + 5 H(+)(in) = a quinol + NAD(+) + 4 H(+)(out). In terms of biological role, NDH-1 shuttles electrons from NADH, via FMN and iron-sulfur (Fe-S) centers, to quinones in the respiratory chain. The immediate electron acceptor for the enzyme in this species is believed to be a menaquinone. Couples the redox reaction to proton translocation (for every two electrons transferred, four hydrogen ions are translocated across the cytoplasmic membrane), and thus conserves the redox energy in a proton gradient. This is NADH-quinone oxidoreductase subunit N from Cutibacterium acnes (strain DSM 16379 / KPA171202) (Propionibacterium acnes).